An 89-amino-acid chain; its full sequence is MTEQIEKVRRALVGRVVSDKMQNTVTVLVERRVKHELYGKVITRSAKYHAHVEDGGAAAGDLVEIEECRPISKTKSWRVAKVLEKARVI.

The protein belongs to the universal ribosomal protein uS17 family. Part of the 30S ribosomal subunit.

One of the primary rRNA binding proteins, it binds specifically to the 5'-end of 16S ribosomal RNA. This is Small ribosomal subunit protein uS17 from Aromatoleum aromaticum (strain DSM 19018 / LMG 30748 / EbN1) (Azoarcus sp. (strain EbN1)).